We begin with the raw amino-acid sequence, 549 residues long: Probable protein kinase UbiB (549 aa).

One can recognise a Protein kinase domain in the interval 123 to 501 (DFNETPLASA…QQQAHKSNYL (379 aa)). ATP-binding positions include 129-137 (LASASISQV) and Lys152. Catalysis depends on Asp287, which acts as the Proton acceptor. Transmembrane regions (helical) follow at residues 498-518 (SNYL…LFNQ) and 520-540 (ATLW…IIGW).

The protein belongs to the ABC1 family. UbiB subfamily.

It is found in the cell inner membrane. Its pathway is cofactor biosynthesis; ubiquinone biosynthesis [regulation]. Its function is as follows. Is probably a protein kinase regulator of UbiI activity which is involved in aerobic coenzyme Q (ubiquinone) biosynthesis. The protein is Probable protein kinase UbiB of Shewanella sp. (strain MR-7).